A 155-amino-acid chain; its full sequence is Transcriptional repressor NrdR (155 aa).

A zinc finger lies at 3-34; sequence CPFCHAEETKVVDSRLVADGAQVRRRRECLEC. Residues 49-139 form the ATP-cone domain; that stretch reads PLIIKRDGRR…VYKRFKDVSD (91 aa).

Belongs to the NrdR family. Zn(2+) is required as a cofactor.

Its function is as follows. Negatively regulates transcription of bacterial ribonucleotide reductase nrd genes and operons by binding to NrdR-boxes. In Legionella pneumophila (strain Paris), this protein is Transcriptional repressor NrdR.